A 150-amino-acid chain; its full sequence is 3-hydroxyacyl-[acyl-carrier-protein] dehydratase FabZ (150 aa).

The active site involves H54.

Belongs to the thioester dehydratase family. FabZ subfamily.

The protein resides in the cytoplasm. The enzyme catalyses a (3R)-hydroxyacyl-[ACP] = a (2E)-enoyl-[ACP] + H2O. Its function is as follows. Involved in unsaturated fatty acids biosynthesis. Catalyzes the dehydration of short chain beta-hydroxyacyl-ACPs and long chain saturated and unsaturated beta-hydroxyacyl-ACPs. The protein is 3-hydroxyacyl-[acyl-carrier-protein] dehydratase FabZ of Vibrio vulnificus (strain CMCP6).